Consider the following 1125-residue polypeptide: Exportin-6 (1125 aa).

Position 2 is an N-acetylalanine (Ala-2). In terms of domain architecture, Importin N-terminal spans 31 to 97; the sequence is IEELLNNFAQ…RSCLPKLLLA (67 aa). Ser-199 is modified (phosphoserine). Thr-201 and Thr-204 each carry phosphothreonine. Ser-208 and Ser-224 each carry phosphoserine.

The protein belongs to the exportin family. Found in a complex with XPO6, Ran, ACTB and PFN1. Interacts with ACTB. Interacts with ACTB in a RanGTP-dependent manner.

The protein localises to the nucleus. Its subcellular location is the cytoplasm. In terms of biological role, mediates the nuclear export of actin and profilin-actin complexes in somatic cells. The sequence is that of Exportin-6 (XPO6) from Homo sapiens (Human).